Reading from the N-terminus, the 197-residue chain is Small ribosomal subunit protein uS4B (197 aa).

The region spanning 88 to 153 (CRLDNMVYRM…IEKYLSNLKN (66 aa)) is the S4 RNA-binding domain.

Belongs to the universal ribosomal protein uS4 family. As to quaternary structure, part of the 30S ribosomal subunit. Contacts protein S5. The interaction surface between S4 and S5 is involved in control of translational fidelity.

Its function is as follows. One of the primary rRNA binding proteins, it binds directly to 16S rRNA where it nucleates assembly of the body of the 30S subunit. With S5 and S12 plays an important role in translational accuracy. The protein is Small ribosomal subunit protein uS4B of Alkaliphilus oremlandii (strain OhILAs) (Clostridium oremlandii (strain OhILAs)).